A 92-amino-acid polypeptide reads, in one-letter code: ATP synthase subunit c (92 aa).

Helical transmembrane passes span 20–40 and 71–91; these read GAGL…GTGL and MAIS…LVFV.

The protein belongs to the ATPase C chain family. As to quaternary structure, F-type ATPases have 2 components, F(1) - the catalytic core - and F(0) - the membrane proton channel. F(1) has five subunits: alpha(3), beta(3), gamma(1), delta(1), epsilon(1). F(0) has three main subunits: a(1), b(2) and c(10-14). The alpha and beta chains form an alternating ring which encloses part of the gamma chain. F(1) is attached to F(0) by a central stalk formed by the gamma and epsilon chains, while a peripheral stalk is formed by the delta and b chains.

It is found in the cell membrane. Its function is as follows. F(1)F(0) ATP synthase produces ATP from ADP in the presence of a proton or sodium gradient. F-type ATPases consist of two structural domains, F(1) containing the extramembraneous catalytic core and F(0) containing the membrane proton channel, linked together by a central stalk and a peripheral stalk. During catalysis, ATP synthesis in the catalytic domain of F(1) is coupled via a rotary mechanism of the central stalk subunits to proton translocation. Key component of the F(0) channel; it plays a direct role in translocation across the membrane. A homomeric c-ring of between 10-14 subunits forms the central stalk rotor element with the F(1) delta and epsilon subunits. This Mycoplasmopsis pulmonis (strain UAB CTIP) (Mycoplasma pulmonis) protein is ATP synthase subunit c.